A 177-amino-acid chain; its full sequence is Ferritin light chain, oocyte isoform (177 aa).

The 150-residue stretch at 9-158 folds into the Ferritin-like diiron domain; it reads QNYHEESEAG…DHLTNLRRVK (150 aa). Fe cation-binding residues include Glu26, His64, and Glu106.

It belongs to the ferritin family. As to quaternary structure, oligomer of 24 subunits. There are two types of subunits: L (light) chain and H (heavy) chain. The functional molecule is roughly spherical and contains a central cavity into which the insoluble mineral iron core is deposited.

Stores iron in a soluble, non-toxic, readily available form. Important for iron homeostasis. Iron is taken up in the ferrous form and deposited as ferric hydroxides after oxidation. This chain is Ferritin light chain, oocyte isoform, found in Xenopus laevis (African clawed frog).